The primary structure comprises 784 residues: ATP-dependent 6-phosphofructokinase, platelet type (784 aa).

Met-1 carries the post-translational modification N-acetylmethionine. An N-terminal catalytic PFK domain 1 region spans residues 1 to 399 (MDADDSRAPK…NLNTYKRLAI (399 aa)). A phosphoserine mark is found at Ser-6, Ser-12, and Ser-21. Residues Gly-34, 97-98 (RC), and 127-130 (GDGS) contribute to the ATP site. Asp-128 is a binding site for Mg(2+). Residue Ser-142 is modified to Phosphoserine. Substrate is bound by residues 173–175 (SID), Arg-210, 217–219 (MGR), Glu-273, Arg-301, and 307–310 (HVQR). The active-site Proton acceptor is the Asp-175. Position 386 is a phosphoserine (Ser-386). An N6-acetyllysine modification is found at Lys-395. The segment at 400–411 (KLPDDQIPKTNC) is interdomain linker. Residues 412–784 (NVAVINVGAP…QLEHVQPWSV (373 aa)) form a C-terminal regulatory PFK domain 2 region. Residue Arg-481 participates in beta-D-fructose 2,6-bisphosphate binding. Lys-486 carries the N6-acetyllysine modification. Residues 538–542 (TVSNN), Arg-576, 583–585 (MGG), and Glu-639 contribute to the beta-D-fructose 2,6-bisphosphate site. O-linked (GlcNAc) serine glycosylation is present at Ser-540. Position 651 is a phosphotyrosine (Tyr-651). Beta-D-fructose 2,6-bisphosphate contacts are provided by residues Arg-665 and 671-674 (HMQQ). N6-acetyllysine is present on Lys-688. Arg-744 serves as a coordination point for beta-D-fructose 2,6-bisphosphate. At Ser-783 the chain carries Phosphoserine.

Belongs to the phosphofructokinase type A (PFKA) family. ATP-dependent PFK group I subfamily. Eukaryotic two domain clade 'E' sub-subfamily. As to quaternary structure, homo- and heterotetramers. Phosphofructokinase (PFK) enzyme functions as a tetramer composed of different combinations of 3 types of subunits, called PFKM (M), PFKL (L) and PFKP (P). The composition of the PFK tetramer differs according to the tissue type it is present in. The kinetic and regulatory properties of the tetrameric enzyme are dependent on the subunit composition, hence can vary across tissues. Interacts with ATG4B; promoting phosphorylation of ATG4B. Requires Mg(2+) as cofactor. In terms of processing, glcNAcylation decreases enzyme activity. Post-translationally, phosphorylation at Ser-386 promotes interaction with ATG4B.

It is found in the cytoplasm. It carries out the reaction beta-D-fructose 6-phosphate + ATP = beta-D-fructose 1,6-bisphosphate + ADP + H(+). Its pathway is carbohydrate degradation; glycolysis; D-glyceraldehyde 3-phosphate and glycerone phosphate from D-glucose: step 3/4. Allosterically activated by ADP, AMP, or fructose 2,6-bisphosphate, and allosterically inhibited by ATP or citrate. Its function is as follows. Catalyzes the phosphorylation of D-fructose 6-phosphate to fructose 1,6-bisphosphate by ATP, the first committing step of glycolysis. The chain is ATP-dependent 6-phosphofructokinase, platelet type (PFKP) from Pongo abelii (Sumatran orangutan).